The primary structure comprises 613 residues: Histone acetyltransferase KAT7 (613 aa).

A disordered region spans residues 1-175 (MAIGVVKRNA…SDLSHRPKRR (175 aa)). Phosphoserine occurs at positions 12, 52, 55, 59, and 66. The span at 44 to 59 (VTRSSARLSQSSQDSS) shows a compositional bias: low complexity. T87 and T90 each carry phosphothreonine. Residues 98 to 107 (QTRSSGSETE) are compositionally biased toward polar residues. S104 carries the phosphoserine modification. A Phosphothreonine modification is found at T106. Residues 112 to 127 (FSDRETKNTADHDESP) show a composition bias toward basic and acidic residues. S113 and S126 each carry phosphoserine. T130 carries the post-translational modification Phosphothreonine. Residues 136 to 147 (PSSESDIDISSP) are compositionally biased toward low complexity. Over residues 150 to 170 (SHDESIAKDMSLKDSGSDLSH) the composition is skewed to basic and acidic residues. Residues S160, S164, S166, and S180 each carry the phosphoserine modification. The CCHHC-type zinc finger occupies 178-221 (HESYNFNMKCPTPGCNSLGHLTGKHERHFSISGCPLYHNLSADE). N6-acetyllysine occurs at positions 201 and 279. K325 participates in a covalent cross-link: Glycyl lysine isopeptide (Lys-Gly) (interchain with G-Cter in SUMO2). An MYST-type HAT domain is found at 334–609 (EGSNMIKTIA…MDPSCLKWTP (276 aa)). A Glycyl lysine isopeptide (Lys-Gly) (interchain with G-Cter in ubiquitin) cross-link involves residue K340. A C2HC MYST-type zinc finger spans residues 367 to 392 (LYMCEFCLKYMKSQTILRRHMAKCVW). C370, C373, H386, and C390 together coordinate Zn(2+). K434 carries the post-translational modification N6-acetyllysine; by autocatalysis. Residues 477–479 (ILT) and 485–490 (RQGYGK) each bind acetyl-CoA. A Phosphoserine modification is found at S508. Residue E510 is the Proton donor/acceptor of the active site. The acetyl-CoA site is built by S514 and S523.

Belongs to the MYST (SAS/MOZ) family. In terms of assembly, component of the HBO1 complex composed of KAT7/HBO1, MEAF6, ING4 or ING5, and one scaffold subunit: complexes containing BRPF scaffold (BRPF1, BRD1/BRPF2 or BRPF3) direct KAT7/HBO1 specificity towards H3K14ac, while complexes containing JADE scaffold (JADE1, JADE2 and JADE3) mediate acetylation of histone H4. Interacts with MCM2 and ORC1. Interacts with the androgen receptor (AR) in the presence of dihydrotestosterone. Interacts with CDT1. Interacts with MAP2K1 and CUL1. Interacts with p53/TP53; leading to inhibit histone acetyltransferase activity. Post-translationally, phosphorylated at Ser-52 and Ser-55 by ATR in response to DNA damage, promoting its ubiquitination by the CRL4(DDB2) complex and subsequent degradation. Phosphorylation at Ser-52 and Ser-55 by ATR in response to ultraviolet-induced DNA, promotes localization to DNA damage sites. Phosphorylation at Ser-59 by PLK1 during mitosis seems important for prereplicative complex formation and DNA replication licensing, and requires prior phosphorylation at Thr-87 and Thr-90 by CDK1. Phosphorylated by MAP2K1, which accelerates its degradation. In terms of processing, ubiquitinated at Lys-340, leading to proteasomal degradation. Ubiquitinated by the CRL4(DDB2) complex following phosphorylation by ATR, leading to its subsequent degradation. Autoacetylation at Lys-434 is required for proper function. In terms of tissue distribution, widely expressed in adult tissues.

It localises to the nucleus. The protein localises to the chromosome. Its subcellular location is the centromere. The protein resides in the cytoplasm. It is found in the cytosol. The enzyme catalyses L-lysyl-[protein] + acetyl-CoA = N(6)-acetyl-L-lysyl-[protein] + CoA + H(+). With respect to regulation, histone acetyltransferase activity is inhibited by GMNN in the context of a complex with CDT1, inhibiting histone H4 acetylation and DNA replication licensing. In terms of biological role, catalytic subunit of histone acetyltransferase HBO1 complexes, which specifically mediate acetylation of histone H3 at 'Lys-14' (H3K14ac), thereby regulating various processes, such as gene transcription, protein ubiquitination, immune regulation, stem cell pluripotent and self-renewal maintenance and embryonic development. Some complexes also catalyze acetylation of histone H4 at 'Lys-5', 'Lys-8' and 'Lys-12' (H4K5ac, H4K8ac and H4K12ac, respectively), regulating DNA replication initiation, regulating DNA replication initiation. Specificity of the HBO1 complexes is determined by the scaffold subunit: complexes containing BRPF scaffold (BRPF1, BRD1/BRPF2 or BRPF3) direct KAT7/HBO1 specificity towards H3K14ac, while complexes containing JADE (JADE1, JADE2 and JADE3) scaffold direct KAT7/HBO1 specificity towards histone H4. H3K14ac promotes transcriptional elongation by facilitating the processivity of RNA polymerase II. Acts as a key regulator of hematopoiesis by forming a complex with BRD1/BRPF2, directing KAT7/HBO1 specificity towards H3K14ac and promoting erythroid differentiation. H3K14ac is also required for T-cell development. KAT7/HBO1-mediated acetylation facilitates two consecutive steps, licensing and activation, in DNA replication initiation: H3K14ac facilitates the activation of replication origins, and histone H4 acetylation (H4K5ac, H4K8ac and H4K12ac) facilitates chromatin loading of MCM complexes, promoting DNA replication licensing. Acts as a positive regulator of centromeric CENPA assembly: recruited to centromeres and mediates histone acetylation, thereby preventing centromere inactivation mediated by SUV39H1, possibly by increasing histone turnover/exchange. Involved in nucleotide excision repair: phosphorylation by ATR in response to ultraviolet irradiation promotes its localization to DNA damage sites, where it mediates histone acetylation to facilitate recruitment of XPC at the damaged DNA sites. Acts as an inhibitor of NF-kappa-B independently of its histone acetyltransferase activity. Its function is as follows. Plays a central role in the maintenance of leukemia stem cells in acute myeloid leukemia (AML). Acts by mediating acetylation of histone H3 at 'Lys-14' (H3K14ac), thereby facilitating the processivity of RNA polymerase II to maintain the high expression of key genes, such as HOXA9 and HOXA10 that help to sustain the functional properties of leukemia stem cells. This chain is Histone acetyltransferase KAT7, found in Mus musculus (Mouse).